The primary structure comprises 301 residues: Peptidyl-prolyl cis-trans isomerase E (301 aa).

Residues 5 to 83 form the RRM domain; sequence KRVLYVGGLA…GRTIRVNLAK (79 aa). Phosphoserine occurs at positions 91, 97, and 119. Residues 107 to 140 form a disordered region; it reads GKTLEENKEEEGSEPPKAETQEGEPAAKKARSNP. Residues 143–299 enclose the PPIase cyclophilin-type domain; that stretch reads YMDIKIGNKP…QKVIIADCGE (157 aa).

Belongs to the cyclophilin-type PPIase family. PPIase E subfamily. Identified in the spliceosome C complex. Component of the XAB2 complex, a multimeric protein complex composed of XAB2, PRPF19, AQR, ZNF830, ISY1, and PPIE. Identified in a pentameric intron-binding (IB) complex composed of AQR, XAB2, ISY1, ZNF830 and PPIE that is incorporated into the spliceosome as a preassembled complex. The IB complex does not contain PRPF19. Interacts (via RNA-binding domain) with KMT2A (via the third PHD-type zinc-finger).

The protein localises to the nucleus. The catalysed reaction is [protein]-peptidylproline (omega=180) = [protein]-peptidylproline (omega=0). In terms of biological role, involved in pre-mRNA splicing as component of the spliceosome. Combines RNA-binding and PPIase activities. Binds mRNA and has a preference for single-stranded RNA molecules with poly-A and poly-U stretches, suggesting it binds to the poly(A)-region in the 3'-UTR of mRNA molecules. Catalyzes the cis-trans isomerization of proline imidic peptide bonds in proteins. Inhibits KMT2A activity; this requires proline isomerase activity. The chain is Peptidyl-prolyl cis-trans isomerase E (PPIE) from Pongo abelii (Sumatran orangutan).